The chain runs to 245 residues: Eukaryotic translation initiation factor 6 (245 aa).

Phosphotyrosine is present on tyrosine 113. At threonine 165 the chain carries Phosphothreonine. Serine 166 is modified (phosphoserine). 2 positions are modified to phosphoserine; by CK1: serine 174 and serine 175. A Phosphoserine; by PKC modification is found at serine 235. A phosphoserine mark is found at serine 239 and serine 243.

It belongs to the eIF-6 family. In terms of assembly, monomer. Associates with the 60S ribosomal subunit. Interacts with RACK1. Interacts with DICER1, AGO2, TARBP2, MOV10 and RPL7A; they form a large RNA-induced silencing complex (RISC). Post-translationally, phosphorylation at Ser-174 and Ser-175 by CSNK1D/CK1 promotes nuclear export. In terms of processing, ufmylated by UFL1. In terms of tissue distribution, detected in bladder, duodenum, liver, esophagus, pancreas, adipose tissue, megakaryocytes and testis with lower levels in muscle (at protein level).

It is found in the cytoplasm. It localises to the nucleus. Its subcellular location is the nucleolus. Its function is as follows. Binds to the 60S ribosomal subunit and prevents its association with the 40S ribosomal subunit to form the 80S initiation complex in the cytoplasm. Behaves as a stimulatory translation initiation factor downstream insulin/growth factors. Is also involved in ribosome biogenesis. Associates with pre-60S subunits in the nucleus and is involved in its nuclear export. Cytoplasmic release of TIF6 from 60S subunits and nuclear relocalization is promoted by a RACK1 (RACK1)-dependent protein kinase C activity. In tissues responsive to insulin, controls fatty acid synthesis and glycolysis by exerting translational control of adipogenic transcription factors such as CEBPB, CEBPD and ATF4 that have G/C rich or uORF in their 5'UTR. Required for ROS-dependent megakaryocyte maturation and platelets formation, controls the expression of mitochondrial respiratory chain genes involved in reactive oxygen species (ROS) synthesis. Involved in miRNA-mediated gene silencing by the RNA-induced silencing complex (RISC). Required for both miRNA-mediated translational repression and miRNA-mediated cleavage of complementary mRNAs by RISC. Modulates cell cycle progression and global translation of pre-B cells, its activation seems to be rate-limiting in tumorigenesis and tumor growth. The sequence is that of Eukaryotic translation initiation factor 6 (Eif6) from Mus musculus (Mouse).